A 100-amino-acid chain; its full sequence is Succinate dehydrogenase assembly factor 4, mitochondrial (100 aa).

The transit peptide at 1-31 (MFNRNLRAVILKNYNKALTRCLHDAGNLKRP) directs the protein to the mitochondrion. The disordered stretch occupies residues 24–100 (DAGNLKRPTP…YSYEGRVTDF (77 aa)). 2 stretches are compositionally biased toward basic and acidic residues: residues 36-68 (LPKE…KDFE) and 85-100 (PTVH…VTDF).

Belongs to the SDHAF4 family. Interacts with sdh1 in its FAD-bound form.

The protein resides in the mitochondrion matrix. Its function is as follows. Plays an essential role in the assembly of succinate dehydrogenase (SDH), an enzyme complex (also referred to as respiratory complex II) that is a component of both the tricarboxylic acid (TCA) cycle and the mitochondrial electron transport chain, and which couples the oxidation of succinate to fumarate with the reduction of ubiquinone (coenzyme Q) to ubiquinol. Binds to the flavoprotein subunit sdh1 in its FAD-bound form, blocking the generation of excess reactive oxygen species (ROS) and facilitating its assembly with the iron-sulfur protein subunit sdh2 into the SDH catalytic dimer. The chain is Succinate dehydrogenase assembly factor 4, mitochondrial from Schizosaccharomyces pombe (strain 972 / ATCC 24843) (Fission yeast).